Reading from the N-terminus, the 120-residue chain is Transcription elongation factor 1 homolog (120 aa).

4 residues coordinate Zn(2+): C25, C28, C49, and C52. Acidic residues predominate over residues 84–110 (EDDVVQEEEEEVEEEEEEEEEEDDEDD). A disordered region spans residues 84–120 (EDDVVQEEEEEVEEEEEEEEEEDDEDDHVSVKRKYNF).

It belongs to the ELOF1 family.

Its subcellular location is the nucleus. Functionally, transcription elongation factor implicated in the maintenance of proper chromatin structure in actively transcribed regions. The chain is Transcription elongation factor 1 homolog from Arabidopsis thaliana (Mouse-ear cress).